The primary structure comprises 133 residues: Protein FwdD (133 aa).

The sequence is that of Protein FwdD (fwdD) from Methanocaldococcus jannaschii (strain ATCC 43067 / DSM 2661 / JAL-1 / JCM 10045 / NBRC 100440) (Methanococcus jannaschii).